The chain runs to 341 residues: MAP3K12-binding inhibitory protein 1 (341 aa).

Residue serine 91 is modified to Phosphoserine. Glycyl lysine isopeptide (Lys-Gly) (interchain with G-Cter in SUMO2) cross-links involve residues lysine 94, lysine 127, lysine 137, lysine 151, and lysine 233. Residues 170–341 (AEINENNVRE…EADSMAAHLP (172 aa)) form an interaction with MAP3K12 region. Residues 269-283 (IYQRIKKLEDKILEL) form a leucine-zipper 1 region. Lysine 299 is subject to N6-acetyllysine; alternate. A Glycyl lysine isopeptide (Lys-Gly) (interchain with G-Cter in SUMO2); alternate cross-link involves residue lysine 299. Residues lysine 302 and lysine 323 each participate in a glycyl lysine isopeptide (Lys-Gly) (interchain with G-Cter in SUMO2) cross-link. The interval 312–327 (LAELDEKISALKRALL) is leucine-zipper 2.

In terms of assembly, component of the ADA2A-containing complex (ATAC), composed of KAT14, KAT2A, TADA2L, TADA3L, ZZ3, MBIP, WDR5, YEATS2, CCDC101 and DR1. In the complex, it probably interacts directly with KAT2A, KAT14 and WDR5.

The protein localises to the nucleus. It localises to the cytoplasm. Functionally, inhibits the MAP3K12 activity to induce the activation of the JNK/SAPK pathway. Component of the ATAC complex, a complex with histone acetyltransferase activity on histones H3 and H4. The protein is MAP3K12-binding inhibitory protein 1 (Mbip) of Mus musculus (Mouse).